We begin with the raw amino-acid sequence, 216 residues long: Elongation factor Ts (216 aa).

Residues 81–84 (TDFV) form an involved in Mg(2+) ion dislocation from EF-Tu region.

The protein belongs to the EF-Ts family.

The protein localises to the cytoplasm. Functionally, associates with the EF-Tu.GDP complex and induces the exchange of GDP to GTP. It remains bound to the aminoacyl-tRNA.EF-Tu.GTP complex up to the GTP hydrolysis stage on the ribosome. The protein is Elongation factor Ts of Geotalea uraniireducens (strain Rf4) (Geobacter uraniireducens).